Consider the following 24-residue polypeptide: Brevinin-1Bc (24 aa).

A disulfide bridge links C18 with C24.

As to expression, expressed by the skin glands.

It localises to the secreted. Functionally, antibacterial activity against Gram-positive bacterium S.aureus. The protein is Brevinin-1Bc of Lithobates berlandieri (Rio Grande leopard frog).